Here is a 303-residue protein sequence, read N- to C-terminus: Ribonuclease Z (303 aa).

Residues histidine 61, histidine 63, aspartate 65, histidine 66, histidine 139, aspartate 207, and histidine 266 each contribute to the Zn(2+) site. The active-site Proton acceptor is aspartate 65.

Belongs to the RNase Z family. In terms of assembly, homodimer. Requires Zn(2+) as cofactor.

It catalyses the reaction Endonucleolytic cleavage of RNA, removing extra 3' nucleotides from tRNA precursor, generating 3' termini of tRNAs. A 3'-hydroxy group is left at the tRNA terminus and a 5'-phosphoryl group is left at the trailer molecule.. Zinc phosphodiesterase, which displays some tRNA 3'-processing endonuclease activity. Probably involved in tRNA maturation, by removing a 3'-trailer from precursor tRNA. This Clostridium kluyveri (strain ATCC 8527 / DSM 555 / NBRC 12016 / NCIMB 10680 / K1) protein is Ribonuclease Z.